A 209-amino-acid chain; its full sequence is Uracil phosphoribosyltransferase (209 aa).

Residues arginine 79, arginine 104, and 131–139 each bind 5-phospho-alpha-D-ribose 1-diphosphate; that span reads DPMLATGGS. Uracil is bound by residues isoleucine 194 and 199–201; that span reads GDA. 5-phospho-alpha-D-ribose 1-diphosphate is bound at residue aspartate 200.

It belongs to the UPRTase family. Mg(2+) is required as a cofactor.

The enzyme catalyses UMP + diphosphate = 5-phospho-alpha-D-ribose 1-diphosphate + uracil. Its pathway is pyrimidine metabolism; UMP biosynthesis via salvage pathway; UMP from uracil: step 1/1. With respect to regulation, allosterically activated by GTP. In terms of biological role, catalyzes the conversion of uracil and 5-phospho-alpha-D-ribose 1-diphosphate (PRPP) to UMP and diphosphate. This is Uracil phosphoribosyltransferase from Bacillus licheniformis (strain ATCC 14580 / DSM 13 / JCM 2505 / CCUG 7422 / NBRC 12200 / NCIMB 9375 / NCTC 10341 / NRRL NRS-1264 / Gibson 46).